Consider the following 99-residue polypeptide: MAKVNIKPLEDKLLVQIVEAETTTASGLVIPDTAKEKPQEATVVAVGPGRTDENGKRVPMDVAEGDVVIFSKYGGTEIKYAGEEYLILSQRDVLAVVEK.

Belongs to the GroES chaperonin family. In terms of assembly, heptamer of 7 subunits arranged in a ring. Interacts with the chaperonin GroEL.

The protein resides in the cytoplasm. Functionally, together with the chaperonin GroEL, plays an essential role in assisting protein folding. The GroEL-GroES system forms a nano-cage that allows encapsulation of the non-native substrate proteins and provides a physical environment optimized to promote and accelerate protein folding. GroES binds to the apical surface of the GroEL ring, thereby capping the opening of the GroEL channel. The protein is Co-chaperonin GroES of Corynebacterium kroppenstedtii (strain DSM 44385 / JCM 11950 / CIP 105744 / CCUG 35717).